Here is a 471-residue protein sequence, read N- to C-terminus: Argininosuccinate lyase (471 aa).

Belongs to the lyase 1 family. Argininosuccinate lyase subfamily.

It localises to the cytoplasm. The enzyme catalyses 2-(N(omega)-L-arginino)succinate = fumarate + L-arginine. The protein operates within amino-acid biosynthesis; L-arginine biosynthesis; L-arginine from L-ornithine and carbamoyl phosphate: step 3/3. The protein is Argininosuccinate lyase of Parasynechococcus marenigrum (strain WH8102).